A 156-amino-acid polypeptide reads, in one-letter code: Rhombotin-1 (156 aa).

LIM zinc-binding domains lie at 22-84 and 86-148; these read KGCA…LFGT and GNCA…GHLN.

Expressed in the brain and not in the thymus.

It is found in the nucleus. Functionally, may be involved in gene regulation within neural lineage cells potentially by direct DNA binding or by binding to other transcription factors. The sequence is that of Rhombotin-1 (Lmo1) from Mus musculus (Mouse).